The following is a 162-amino-acid chain: CASP-like protein 1C2 (162 aa).

Residues 1 to 6 (MMKPKR) lie on the Cytoplasmic side of the membrane. Residues 7–27 (LLSLLLRLIAVGATLAAVIIM) form a helical membrane-spanning segment. Residues 28 to 49 (ATSHEKGTFFAVSYEAKYTDTP) are Extracellular-facing. Residues 50 to 70 (AFKYFVIANAIVTVYGFLVLF) traverse the membrane as a helical segment. Topologically, residues 71–79 (HPPGSPLWR) are cytoplasmic. Residues 80–100 (LVLALDLVFTMLLISSISAAL) form a helical membrane-spanning segment. Residues 101 to 130 (AVAQVGKNGNSRAGWLPVCGQVTKYCNQVT) are Extracellular-facing. Residues 131 to 151 (GALVAGLIALITYIILLLHSI) form a helical membrane-spanning segment. At 152 to 162 (YTFLNPLLEKA) the chain is on the cytoplasmic side.

The protein belongs to the Casparian strip membrane proteins (CASP) family. As to quaternary structure, homodimer and heterodimers.

The protein localises to the cell membrane. In Populus trichocarpa (Western balsam poplar), this protein is CASP-like protein 1C2.